The primary structure comprises 247 residues: Ribose-5-phosphate isomerase (247 aa).

This sequence belongs to the ribose 5-phosphate isomerase family.

It is found in the cytoplasm. The enzyme catalyses aldehydo-D-ribose 5-phosphate = D-ribulose 5-phosphate. The protein operates within carbohydrate degradation; pentose phosphate pathway; D-ribose 5-phosphate from D-ribulose 5-phosphate (non-oxidative stage): step 1/1. The chain is Ribose-5-phosphate isomerase (RKI1) from Meyerozyma guilliermondii (strain ATCC 6260 / CBS 566 / DSM 6381 / JCM 1539 / NBRC 10279 / NRRL Y-324) (Yeast).